We begin with the raw amino-acid sequence, 218 residues long: 5-oxoprolinase subunit B (218 aa).

This sequence belongs to the PxpB family. Forms a complex composed of PxpA, PxpB and PxpC.

The enzyme catalyses 5-oxo-L-proline + ATP + 2 H2O = L-glutamate + ADP + phosphate + H(+). Catalyzes the cleavage of 5-oxoproline to form L-glutamate coupled to the hydrolysis of ATP to ADP and inorganic phosphate. The polypeptide is 5-oxoprolinase subunit B (Escherichia coli O157:H7).